We begin with the raw amino-acid sequence, 423 residues long: Glucose-1-phosphate adenylyltransferase (423 aa).

Alpha-D-glucose 1-phosphate contacts are provided by residues Tyr-108, Gly-173, Glu-188–Lys-189, and Ser-207.

This sequence belongs to the bacterial/plant glucose-1-phosphate adenylyltransferase family. Homotetramer.

It carries out the reaction alpha-D-glucose 1-phosphate + ATP + H(+) = ADP-alpha-D-glucose + diphosphate. The protein operates within glycan biosynthesis; glycogen biosynthesis. In terms of biological role, involved in the biosynthesis of ADP-glucose, a building block required for the elongation reactions to produce glycogen. Catalyzes the reaction between ATP and alpha-D-glucose 1-phosphate (G1P) to produce pyrophosphate and ADP-Glc. The protein is Glucose-1-phosphate adenylyltransferase of Francisella tularensis subsp. novicida (strain U112).